The sequence spans 1493 residues: Son of sevenless homolog (1493 aa).

Positions 244–448 (TYESVAVDFL…ERVVGCVSDM (205 aa)) constitute a DH domain. Residues 496-606 (ELEKDGDLGM…WMAVLVKVTT (111 aa)) enclose the PH domain. Residues 656–824 (GIPVIKCGTV…TILALIEKRV (169 aa)) form the N-terminal Ras-GEF domain. Positions 897-1164 (HPIEIGRQLT…YNKSLEIQPK (268 aa)) constitute a Ras-GEF domain. Disordered regions lie at residues 1067 to 1091 (KSPPHGAAGAQKQQKDDLKASDPEN), 1165 to 1248 (GLDT…DDAP), and 1263 to 1493 (HPKI…SSNK). Residues 1079–1088 (QQKDDLKASD) are compositionally biased toward basic and acidic residues. 2 stretches are compositionally biased toward polar residues: residues 1208–1231 (HSQNSHSAPHAMSSQSSTVPNTPL) and 1279–1289 (SRANQSNSVSL). Over residues 1308-1326 (STATSPTTLTTTTTPSSAG) the composition is skewed to low complexity. Polar residues predominate over residues 1350 to 1361 (LTPSRDNSSPSA). The segment covering 1381–1400 (STSSDVSSSPSTSGSTSSAT) has biased composition (low complexity). Residues 1402–1417 (ENQEQLRVIFDREESH) are compositionally biased toward basic and acidic residues. Over residues 1426 to 1435 (PLPPALPPPR) the composition is skewed to pro residues. Residues 1453 to 1464 (HNSNSPTLSSEQ) show a composition bias toward polar residues.

In terms of assembly, interacts with cmd-1 in the presence of Ca(2+).

In terms of biological role, promotes the exchange of Ras-bound GDP by GTP. May regulate signaling pathways downstream of receptor tyrosine kinase, egl-15 and let-23. Required for larval and male spicule development, fluid homeostasis, vulva induction, spermatogenesis, and oogenesis by promoting meiosis prophase exit during oocyte maturation. Required for the delamination of G1 cell by promoting the loss of cell junctions and detachment from the excretory system during larval development. Plays a role in nicotinic acetylcholine receptor (nAChR)-mediated sensitivity to nicotine. Regulates synaptic levels of nAchR subunit lev-1 in the nerve cord. The sequence is that of Son of sevenless homolog from Caenorhabditis elegans.